A 101-amino-acid polypeptide reads, in one-letter code: Small ribosomal subunit protein uS14 (101 aa).

The segment covering 1–10 (MAKNSMVERD) has biased composition (basic and acidic residues). Positions 1 to 20 (MAKNSMVERDRKRRKLAQKY) are disordered.

This sequence belongs to the universal ribosomal protein uS14 family. In terms of assembly, part of the 30S ribosomal subunit. Contacts proteins S3 and S10.

Binds 16S rRNA, required for the assembly of 30S particles and may also be responsible for determining the conformation of the 16S rRNA at the A site. This is Small ribosomal subunit protein uS14 from Halorhodospira halophila (strain DSM 244 / SL1) (Ectothiorhodospira halophila (strain DSM 244 / SL1)).